The chain runs to 132 residues: Large ribosomal subunit protein uL14 (132 aa).

The protein belongs to the universal ribosomal protein uL14 family. As to quaternary structure, part of the 50S ribosomal subunit. Forms a cluster with proteins L3 and L24e, part of which may contact the 16S rRNA in 2 intersubunit bridges.

Functionally, binds to 23S rRNA. Forms part of two intersubunit bridges in the 70S ribosome. The chain is Large ribosomal subunit protein uL14 from Methanococcus maripaludis (strain C7 / ATCC BAA-1331).